A 467-amino-acid polypeptide reads, in one-letter code: Chromosomal replication initiator protein DnaA (467 aa).

The segment at 1–90 (MSLSLWQQCL…KSVTQTPQAA (90 aa)) is domain I, interacts with DnaA modulators. Residues 91 to 130 (VTSNVAAPAQVAQTQPQRAAPSTRSGWDNVPAPAEPTYRS) are domain II. Residues 97–111 (APAQVAQTQPQRAAP) are compositionally biased toward low complexity. A disordered region spans residues 97 to 119 (APAQVAQTQPQRAAPSTRSGWDN). The domain III, AAA+ region stretch occupies residues 131-347 (NVNVKHTFDN…GALNRVIANA (217 aa)). ATP-binding residues include G175, G177, K178, and T179. Positions 348 to 467 (NFTGRAITID…FSNLIRTLSS (120 aa)) are domain IV, binds dsDNA.

It belongs to the DnaA family. As to quaternary structure, oligomerizes as a right-handed, spiral filament on DNA at oriC.

It is found in the cytoplasm. In terms of biological role, plays an essential role in the initiation and regulation of chromosomal replication. ATP-DnaA binds to the origin of replication (oriC) to initiate formation of the DNA replication initiation complex once per cell cycle. Binds the DnaA box (a 9 base pair repeat at the origin) and separates the double-stranded (ds)DNA. Forms a right-handed helical filament on oriC DNA; dsDNA binds to the exterior of the filament while single-stranded (ss)DNA is stabiized in the filament's interior. The ATP-DnaA-oriC complex binds and stabilizes one strand of the AT-rich DNA unwinding element (DUE), permitting loading of DNA polymerase. After initiation quickly degrades to an ADP-DnaA complex that is not apt for DNA replication. Binds acidic phospholipids. The protein is Chromosomal replication initiator protein DnaA of Escherichia coli O157:H7.